Consider the following 339-residue polypeptide: Ubiquitin carboxyl-terminal hydrolase 50 (339 aa).

The USP domain occupies T44–A339. The active-site Nucleophile is C53. H327 acts as the Proton acceptor in catalysis.

It belongs to the peptidase C19 family. As to expression, weakly expressed in a few tissues.

The protein localises to the cytoplasm. It localises to the cytoskeleton. It is found in the microtubule organizing center. The protein resides in the centrosome. Its subcellular location is the nucleus. The enzyme catalyses Thiol-dependent hydrolysis of ester, thioester, amide, peptide and isopeptide bonds formed by the C-terminal Gly of ubiquitin (a 76-residue protein attached to proteins as an intracellular targeting signal).. Its function is as follows. Deubiquitinating enzyme that removes conjugated ubiquitin from specific proteins to regulate different cellular processes. Regulates the inflammasome signaling pathway by deubiquitinating 'Lys-63'-linked polyubiquitination of the PYCARD/ASC adapter protein. Regulates the ubiquitination and stability of the ACE2 protein. Acts as a negative regulator of the G2/M checkpoint pathway, by preventing serine/threonine kinase WEE1 degradation, thereby repressing entry into mitosis following activation of the G2/M DNA damage checkpoint. The polypeptide is Ubiquitin carboxyl-terminal hydrolase 50 (Homo sapiens (Human)).